The sequence spans 192 residues: 7-methyl-GTP pyrophosphatase (192 aa).

Asp70 (proton acceptor) is an active-site residue.

This sequence belongs to the Maf family. YceF subfamily. Requires a divalent metal cation as cofactor.

It localises to the cytoplasm. The enzyme catalyses N(7)-methyl-GTP + H2O = N(7)-methyl-GMP + diphosphate + H(+). Nucleoside triphosphate pyrophosphatase that hydrolyzes 7-methyl-GTP (m(7)GTP). May have a dual role in cell division arrest and in preventing the incorporation of modified nucleotides into cellular nucleic acids. The sequence is that of 7-methyl-GTP pyrophosphatase from Xanthomonas campestris pv. campestris (strain 8004).